The chain runs to 184 residues: Photosystem I assembly protein Ycf4 (184 aa).

A run of 2 helical transmembrane segments spans residues 19–39 (ISNFCWAFILFLGSLGFLLVG) and 57–77 (IIFFPQGLVMSFYGIAGLFIS).

Belongs to the Ycf4 family.

The protein localises to the plastid. It localises to the chloroplast thylakoid membrane. In terms of biological role, seems to be required for the assembly of the photosystem I complex. In Nicotiana sylvestris (Wood tobacco), this protein is Photosystem I assembly protein Ycf4.